The sequence spans 247 residues: MHTKDQIFAAPIARLGDFCFDEQVVDVFPDMIQRSVPGYSNIISAIGMMAARYAQPQSRLYDLGCSLGAATQAMRRHLTQPGCHITAVDLSHPMIERARAHLSGFKSEVPVALVEADICDIAIENASVVVLNFTLQFVDPEKRMALIQRIFDGLRPGGILILSEKFRFEDEPVNDLLIELHLDFKRANGYSELEISQKRNALENVMRTDSLETHRSRLQSAGFVHQDLWFQCFNFGSMIAIKSSDAN.

Residues Tyr39, 64–66 (GCS), 117–118 (DI), Asn132, and Arg199 contribute to the S-adenosyl-L-methionine site.

It belongs to the class I-like SAM-binding methyltransferase superfamily. Cx-SAM synthase family. Homodimer.

The enzyme catalyses prephenate + S-adenosyl-L-methionine = carboxy-S-adenosyl-L-methionine + 3-phenylpyruvate + H2O. Its function is as follows. Catalyzes the conversion of S-adenosyl-L-methionine (SAM) to carboxy-S-adenosyl-L-methionine (Cx-SAM). The sequence is that of Carboxy-S-adenosyl-L-methionine synthase from Aeromonas salmonicida (strain A449).